Consider the following 343-residue polypeptide: DNA repair and recombination protein RadA (343 aa).

Residue 107-114 (GEFGAGKS) participates in ATP binding.

This sequence belongs to the eukaryotic RecA-like protein family.

In terms of biological role, involved in DNA repair and in homologous recombination. Binds and assemble on single-stranded DNA to form a nucleoprotein filament. Hydrolyzes ATP in a ssDNA-dependent manner and promotes DNA strand exchange between homologous DNA molecules. This is DNA repair and recombination protein RadA from Haloquadratum walsbyi (strain DSM 16790 / HBSQ001).